The following is an 89-amino-acid chain: Small ribosomal subunit protein uS15 (89 aa).

It belongs to the universal ribosomal protein uS15 family. In terms of assembly, part of the 30S ribosomal subunit. Forms a bridge to the 50S subunit in the 70S ribosome, contacting the 23S rRNA.

In terms of biological role, one of the primary rRNA binding proteins, it binds directly to 16S rRNA where it helps nucleate assembly of the platform of the 30S subunit by binding and bridging several RNA helices of the 16S rRNA. Its function is as follows. Forms an intersubunit bridge (bridge B4) with the 23S rRNA of the 50S subunit in the ribosome. This chain is Small ribosomal subunit protein uS15, found in Arthrobacter sp. (strain FB24).